A 467-amino-acid polypeptide reads, in one-letter code: Probable glutamate decarboxylase gamma (467 aa).

N6-(pyridoxal phosphate)lysine is present on Lys-278.

The protein belongs to the group II decarboxylase family. The cofactor is pyridoxal 5'-phosphate.

It catalyses the reaction L-glutamate + H(+) = 4-aminobutanoate + CO2. The protein is Probable glutamate decarboxylase gamma of Listeria monocytogenes serovar 1/2a (strain ATCC BAA-679 / EGD-e).